The sequence spans 98 residues: UPF0390 protein zgc136864 (98 aa).

The segment covering 1–30 (MAQGKQKFKAQRPGGAKKHQNKPKGLKKGG) has biased composition (basic residues). 2 disordered regions span residues 1-38 (MAQG…PKKA) and 63-98 (TQKA…GPSK). Residues 83–98 (KSGTAGAPKPAAGPSK) show a composition bias toward low complexity.

Belongs to the UPF0390 family.

The chain is UPF0390 protein zgc136864 from Danio rerio (Zebrafish).